Here is a 504-residue protein sequence, read N- to C-terminus: Ribose import ATP-binding protein RbsA (504 aa).

2 ABC transporter domains span residues 6 to 242 and 250 to 495; these read LELN…VGRR and IDVQ…VGKT. Residue 38–45 coordinates ATP; the sequence is GENGAGKS.

This sequence belongs to the ABC transporter superfamily. Ribose importer (TC 3.A.1.2.1) family. As to quaternary structure, the complex is composed of an ATP-binding protein (RbsA), two transmembrane proteins (RbsC) and a solute-binding protein (RbsB).

Its subcellular location is the cell inner membrane. The enzyme catalyses D-ribose(out) + ATP + H2O = D-ribose(in) + ADP + phosphate + H(+). Part of the ABC transporter complex RbsABC involved in ribose import. Responsible for energy coupling to the transport system. The polypeptide is Ribose import ATP-binding protein RbsA (Aliivibrio fischeri (strain ATCC 700601 / ES114) (Vibrio fischeri)).